We begin with the raw amino-acid sequence, 254 residues long: tRNA (guanine-N(1)-)-methyltransferase (254 aa).

S-adenosyl-L-methionine is bound by residues Gly112 and 131 to 136 (IGDFIL).

It belongs to the RNA methyltransferase TrmD family. As to quaternary structure, homodimer.

Its subcellular location is the cytoplasm. The enzyme catalyses guanosine(37) in tRNA + S-adenosyl-L-methionine = N(1)-methylguanosine(37) in tRNA + S-adenosyl-L-homocysteine + H(+). Its function is as follows. Specifically methylates guanosine-37 in various tRNAs. The chain is tRNA (guanine-N(1)-)-methyltransferase from Persephonella marina (strain DSM 14350 / EX-H1).